A 108-amino-acid chain; its full sequence is Insulin (108 aa).

Positions 1–23 (MALWILLPLLALLILWGPDPAQA) are cleaved as a signal peptide. 2 disulfides stabilise this stretch: Cys30–Cys94 and Cys43–Cys107. Residues 57–88 (EVEDPQVGQVELGAGPGAGSEQTLALEVARQA) constitute a propeptide, c peptide.

This sequence belongs to the insulin family. In terms of assembly, heterodimer of a B chain and an A chain linked by two disulfide bonds.

Its subcellular location is the secreted. Its function is as follows. Insulin decreases blood glucose concentration. It increases cell permeability to monosaccharides, amino acids and fatty acids. It accelerates glycolysis, the pentose phosphate cycle, and glycogen synthesis in liver. This is Insulin (INS) from Rodentia sp.